The chain runs to 160 residues: RTX-II toxin-activating lysine-acyltransferase ApxIIC (160 aa).

Active-site residues include His-23 and Asp-92.

This sequence belongs to the RTX toxin acyltransferase family. As to quaternary structure, homodimer.

It is found in the cytoplasm. The catalysed reaction is a fatty acyl-[ACP] + L-lysyl-[protein] = N(6)-(fatty acyl)-L-lysyl-[protein] + holo-[ACP] + H(+). Functionally, protein-lysine acyltransferase that catalyzes fatty acylation of the protoxin, thereby converting it to the active toxin. This is RTX-II toxin-activating lysine-acyltransferase ApxIIC (apxIIC) from Actinobacillus pleuropneumoniae (Haemophilus pleuropneumoniae).